A 252-amino-acid chain; its full sequence is tRNA (guanine-N(7)-)-methyltransferase (252 aa).

Residues glutamate 80, glutamate 105, aspartate 132, and aspartate 155 each contribute to the S-adenosyl-L-methionine site. Residue aspartate 155 is part of the active site. Residues lysine 159, aspartate 191, and 231–234 contribute to the substrate site; that span reads TKFE.

Belongs to the class I-like SAM-binding methyltransferase superfamily. TrmB family.

It catalyses the reaction guanosine(46) in tRNA + S-adenosyl-L-methionine = N(7)-methylguanosine(46) in tRNA + S-adenosyl-L-homocysteine. It functions in the pathway tRNA modification; N(7)-methylguanine-tRNA biosynthesis. Its function is as follows. Catalyzes the formation of N(7)-methylguanine at position 46 (m7G46) in tRNA. The protein is tRNA (guanine-N(7)-)-methyltransferase of Actinobacillus succinogenes (strain ATCC 55618 / DSM 22257 / CCUG 43843 / 130Z).